Consider the following 136-residue polypeptide: 5-hydroxyisourate hydrolase (136 aa).

The first 20 residues, 1–20 (MKRYILATVIASLVAAPAMA), serve as a signal peptide directing secretion. Residues H31, R69, and Y133 each contribute to the substrate site.

This sequence belongs to the transthyretin family. 5-hydroxyisourate hydrolase subfamily. In terms of assembly, homotetramer.

The protein resides in the periplasm. It catalyses the reaction 5-hydroxyisourate + H2O = 5-hydroxy-2-oxo-4-ureido-2,5-dihydro-1H-imidazole-5-carboxylate + H(+). Its function is as follows. Catalyzes the hydrolysis of 5-hydroxyisourate (HIU) to 2-oxo-4-hydroxy-4-carboxy-5-ureidoimidazoline (OHCU). The chain is 5-hydroxyisourate hydrolase (hiuH) from Salmonella typhimurium (strain LT2 / SGSC1412 / ATCC 700720).